We begin with the raw amino-acid sequence, 359 residues long: MSETSPKLRAELEGIPTYKPGKPAAADGPVAYKLSSNENPYPPLPGVMETVTAAAASFNRYPDMACTSLMAELSDRFGVPLAHLATGTGSVGVAQQLIQATSGPGDEVIYAWRSFEAYPIITQISGARSVQVPLTPGEVHDLDAMADAITDRTRLIFVCNPNNPTGTVVRRAELERFLDRVPSDVLVVLDEAYREFIRDAEVPDGVEFYRERPNVCVLRTFSKAYGLAGLRVGFAIAHEPVAAALRKTAVPFGVSQIAQEAAIASLRAEDELIGRVGSLVCERARVADALRAQGWTVPESQANFVWLRLGERTLAFANACEQAGVVVRPFAGEGVRVTVGESEANDIFLKVSEEFRKEL.

Residues 1–12 are compositionally biased toward basic and acidic residues; it reads MSETSPKLRAEL. Positions 1–21 are disordered; it reads MSETSPKLRAELEGIPTYKPG. N6-(pyridoxal phosphate)lysine is present on K223.

It belongs to the class-II pyridoxal-phosphate-dependent aminotransferase family. As to quaternary structure, homodimer. Requires pyridoxal 5'-phosphate as cofactor.

It catalyses the reaction an aromatic L-alpha-amino acid + 2-oxoglutarate = an aromatic oxo-acid + L-glutamate. In terms of biological role, aminotransferase that catalyzes the conversion of aromatic amino acids and 2-oxoglutarate into corresponding aromatic oxo acids and L-glutamate. The polypeptide is Aromatic amino acid aminotransferase (Streptomyces coelicolor (strain ATCC BAA-471 / A3(2) / M145)).